The following is an 865-amino-acid chain: Alanine--tRNA ligase (865 aa).

Residues H554, H558, C656, and H660 each coordinate Zn(2+).

This sequence belongs to the class-II aminoacyl-tRNA synthetase family. Requires Zn(2+) as cofactor.

The protein resides in the cytoplasm. It catalyses the reaction tRNA(Ala) + L-alanine + ATP = L-alanyl-tRNA(Ala) + AMP + diphosphate. Catalyzes the attachment of alanine to tRNA(Ala) in a two-step reaction: alanine is first activated by ATP to form Ala-AMP and then transferred to the acceptor end of tRNA(Ala). Also edits incorrectly charged Ser-tRNA(Ala) and Gly-tRNA(Ala) via its editing domain. The chain is Alanine--tRNA ligase from Francisella tularensis subsp. tularensis (strain FSC 198).